Consider the following 152-residue polypeptide: Clitocypin-2 (152 aa).

Belongs to the protease inhibitor I48 family. In terms of assembly, homodimer. Expressed in all analyzed tissues, but expression was higher in the pileus and in the lower part of the stipe.

Binds and inhibits cysteine proteinases. Inhibits most strongly papain and cathepsin L, more weakly bromelain and cathepsin B while it is completely ineffective against cathepsin H. The chain is Clitocypin-2 (clt2) from Clitocybe nebularis (Clouded agaric).